The chain runs to 258 residues: tRNA pseudouridine synthase A (258 aa).

Aspartate 52 functions as the Nucleophile in the catalytic mechanism. Position 111 (tyrosine 111) interacts with substrate.

It belongs to the tRNA pseudouridine synthase TruA family. Homodimer.

It carries out the reaction uridine(38/39/40) in tRNA = pseudouridine(38/39/40) in tRNA. Formation of pseudouridine at positions 38, 39 and 40 in the anticodon stem and loop of transfer RNAs. This chain is tRNA pseudouridine synthase A, found in Azorhizobium caulinodans (strain ATCC 43989 / DSM 5975 / JCM 20966 / LMG 6465 / NBRC 14845 / NCIMB 13405 / ORS 571).